The chain runs to 84 residues: Small ribosomal subunit protein bS18 (84 aa).

This sequence belongs to the bacterial ribosomal protein bS18 family. Part of the 30S ribosomal subunit. Forms a tight heterodimer with protein bS6.

Binds as a heterodimer with protein bS6 to the central domain of the 16S rRNA, where it helps stabilize the platform of the 30S subunit. In Polynucleobacter necessarius subsp. necessarius (strain STIR1), this protein is Small ribosomal subunit protein bS18.